The chain runs to 950 residues: Valine--tRNA ligase (950 aa).

The short motif at 40-50 (PNVTGSLHMGH) is the 'HIGH' region element. Positions 551-555 (KMSKS) match the 'KMSKS' region motif. K554 contacts ATP. Residues 881–950 (LIDKSAELGR…AEQRQKIAAL (70 aa)) adopt a coiled-coil conformation.

The protein belongs to the class-I aminoacyl-tRNA synthetase family. ValS type 1 subfamily. In terms of assembly, monomer.

The protein localises to the cytoplasm. It carries out the reaction tRNA(Val) + L-valine + ATP = L-valyl-tRNA(Val) + AMP + diphosphate. Catalyzes the attachment of valine to tRNA(Val). As ValRS can inadvertently accommodate and process structurally similar amino acids such as threonine, to avoid such errors, it has a 'posttransfer' editing activity that hydrolyzes mischarged Thr-tRNA(Val) in a tRNA-dependent manner. This is Valine--tRNA ligase from Pseudomonas aeruginosa (strain ATCC 15692 / DSM 22644 / CIP 104116 / JCM 14847 / LMG 12228 / 1C / PRS 101 / PAO1).